The following is an 89-amino-acid chain: Large ribosomal subunit protein eL37A (89 aa).

Zn(2+) contacts are provided by C19, C22, C34, and C37. The C4-type zinc-finger motif lies at 19 to 37 (CRRCGKRSFHIQKSTCACC).

It belongs to the eukaryotic ribosomal protein eL37 family. In terms of assembly, component of the large ribosomal subunit (LSU). Mature yeast ribosomes consist of a small (40S) and a large (60S) subunit. The 40S small subunit contains 1 molecule of ribosomal RNA (18S rRNA) and at least 33 different proteins. The large 60S subunit contains 3 rRNA molecules (25S, 5.8S and 5S rRNA) and at least 46 different proteins. Zn(2+) serves as cofactor.

The protein resides in the cytoplasm. In terms of biological role, component of the ribosome, a large ribonucleoprotein complex responsible for the synthesis of proteins in the cell. The small ribosomal subunit (SSU) binds messenger RNAs (mRNAs) and translates the encoded message by selecting cognate aminoacyl-transfer RNA (tRNA) molecules. The large subunit (LSU) contains the ribosomal catalytic site termed the peptidyl transferase center (PTC), which catalyzes the formation of peptide bonds, thereby polymerizing the amino acids delivered by tRNAs into a polypeptide chain. The nascent polypeptides leave the ribosome through a tunnel in the LSU and interact with protein factors that function in enzymatic processing, targeting, and the membrane insertion of nascent chains at the exit of the ribosomal tunnel. This is Large ribosomal subunit protein eL37A (rpl3703) from Schizosaccharomyces pombe (strain 972 / ATCC 24843) (Fission yeast).